A 185-amino-acid polypeptide reads, in one-letter code: Ribosome-recycling factor (185 aa).

The protein belongs to the RRF family.

The protein resides in the cytoplasm. Its function is as follows. Responsible for the release of ribosomes from messenger RNA at the termination of protein biosynthesis. May increase the efficiency of translation by recycling ribosomes from one round of translation to another. The sequence is that of Ribosome-recycling factor from Alkalilimnicola ehrlichii (strain ATCC BAA-1101 / DSM 17681 / MLHE-1).